Reading from the N-terminus, the 609-residue chain is Hemagglutinin glycoprotein (609 aa).

Residues 1–34 (MSPPRDRVDAYYKDNFQFKNTRVVLNKEQLLIER) are Intravirion-facing. A helical; Signal-anchor for type II membrane protein transmembrane segment spans residues 35 to 58 (PCMLLTVLFVMFLSLVGLLAIAGI). The Virion surface segment spans residues 59-609 (RLHRAAVNTA…VGIKITCNGK (551 aa)). Residues asparagine 168, asparagine 187, asparagine 200, asparagine 215, and asparagine 395 are each glycosylated (N-linked (GlcNAc...) asparagine; by host).

It belongs to the paramyxoviruses hemagglutinin-neuraminidase family. Non-sialidase subfamily.

The protein resides in the virion membrane. It localises to the host membrane. Functionally, attaches the virus to cell receptors and thereby initiating infection. Binding of H protein to the receptor induces a conformational change that allows the F protein to trigger virion/cell membranes fusion. Down-regulates human MCP/CD46 cell surface expression. The sequence is that of Hemagglutinin glycoprotein (H) from Rinderpest virus (strain Kabete O) (RDV).